The sequence spans 692 residues: Elongation factor G (692 aa).

The tr-type G domain occupies 8–282 (KDYRNIGIMA…AVVDYLPSPL (275 aa)). GTP is bound by residues 17 to 24 (AHIDAGKT), 81 to 85 (DTPGH), and 135 to 138 (NKMD).

This sequence belongs to the TRAFAC class translation factor GTPase superfamily. Classic translation factor GTPase family. EF-G/EF-2 subfamily.

The protein resides in the cytoplasm. Its function is as follows. Catalyzes the GTP-dependent ribosomal translocation step during translation elongation. During this step, the ribosome changes from the pre-translocational (PRE) to the post-translocational (POST) state as the newly formed A-site-bound peptidyl-tRNA and P-site-bound deacylated tRNA move to the P and E sites, respectively. Catalyzes the coordinated movement of the two tRNA molecules, the mRNA and conformational changes in the ribosome. The sequence is that of Elongation factor G (fusA) from Mycoplasmopsis pulmonis (strain UAB CTIP) (Mycoplasma pulmonis).